The sequence spans 262 residues: Imidazole glycerol phosphate synthase subunit HisF (262 aa).

Active-site residues include Asp-11 and Asp-130.

This sequence belongs to the HisA/HisF family. In terms of assembly, heterodimer of HisH and HisF.

The protein resides in the cytoplasm. It carries out the reaction 5-[(5-phospho-1-deoxy-D-ribulos-1-ylimino)methylamino]-1-(5-phospho-beta-D-ribosyl)imidazole-4-carboxamide + L-glutamine = D-erythro-1-(imidazol-4-yl)glycerol 3-phosphate + 5-amino-1-(5-phospho-beta-D-ribosyl)imidazole-4-carboxamide + L-glutamate + H(+). It functions in the pathway amino-acid biosynthesis; L-histidine biosynthesis; L-histidine from 5-phospho-alpha-D-ribose 1-diphosphate: step 5/9. Functionally, IGPS catalyzes the conversion of PRFAR and glutamine to IGP, AICAR and glutamate. The HisF subunit catalyzes the cyclization activity that produces IGP and AICAR from PRFAR using the ammonia provided by the HisH subunit. This chain is Imidazole glycerol phosphate synthase subunit HisF, found in Rhodopirellula baltica (strain DSM 10527 / NCIMB 13988 / SH1).